Here is a 170-residue protein sequence, read N- to C-terminus: Protein SprT (170 aa).

The 143-residue stretch at 23-165 folds into the SprT-like domain; sequence QLANQHLGTD…RECGEKLQFV (143 aa). Residue histidine 78 coordinates Zn(2+). The active site involves glutamate 79. Zn(2+) is bound at residue histidine 82.

The protein belongs to the SprT family. It depends on Zn(2+) as a cofactor.

The protein localises to the cytoplasm. The chain is Protein SprT from Yersinia enterocolitica serotype O:8 / biotype 1B (strain NCTC 13174 / 8081).